The sequence spans 81 residues: Small ribosomal subunit protein bS16 (81 aa).

This sequence belongs to the bacterial ribosomal protein bS16 family.

The protein is Small ribosomal subunit protein bS16 of Acetivibrio thermocellus (strain ATCC 27405 / DSM 1237 / JCM 9322 / NBRC 103400 / NCIMB 10682 / NRRL B-4536 / VPI 7372) (Clostridium thermocellum).